The sequence spans 211 residues: Phosphoserine phosphatase (211 aa).

The Nucleophile role is filled by Asp-11. Residues Asp-11 and Asp-13 each contribute to the Mg(2+) site. Asp-13 functions as the Proton donor in the catalytic mechanism. Substrate-binding positions include Glu-20, Arg-56, 99–100 (SG), and Lys-144. Asp-167 serves as a coordination point for Mg(2+). Residue Asn-170 coordinates substrate.

The protein belongs to the HAD-like hydrolase superfamily. SerB family. Mg(2+) is required as a cofactor.

It catalyses the reaction O-phospho-L-serine + H2O = L-serine + phosphate. The enzyme catalyses O-phospho-D-serine + H2O = D-serine + phosphate. Its pathway is amino-acid biosynthesis; L-serine biosynthesis; L-serine from 3-phospho-D-glycerate: step 3/3. The chain is Phosphoserine phosphatase from Methanocaldococcus jannaschii (strain ATCC 43067 / DSM 2661 / JAL-1 / JCM 10045 / NBRC 100440) (Methanococcus jannaschii).